Here is a 503-residue protein sequence, read N- to C-terminus: Cytochrome P450 3A8 (503 aa).

C442 contacts heme.

This sequence belongs to the cytochrome P450 family. Heme is required as a cofactor.

The protein localises to the endoplasmic reticulum membrane. It localises to the microsome membrane. It carries out the reaction an organic molecule + reduced [NADPH--hemoprotein reductase] + O2 = an alcohol + oxidized [NADPH--hemoprotein reductase] + H2O + H(+). In terms of biological role, catalyzes nifedipine and nilvadipine oxidations. The protein is Cytochrome P450 3A8 (CYP3A8) of Macaca fascicularis (Crab-eating macaque).